The sequence spans 141 residues: MAKKVAAIVKLQVPAGKATPAPPVGPALGQHGVNIMAFVKEFNDRTASQAGLIIPVEITVYEDRSFTFITKTPPAAVLLKKALGIETASGEPNRKKVGKVSREKIREIAEMKMKDLNAASIEAAMRMIEGTARSMGVEVEA.

The protein belongs to the universal ribosomal protein uL11 family. In terms of assembly, part of the ribosomal stalk of the 50S ribosomal subunit. Interacts with L10 and the large rRNA to form the base of the stalk. L10 forms an elongated spine to which L12 dimers bind in a sequential fashion forming a multimeric L10(L12)X complex. Post-translationally, one or more lysine residues are methylated.

Forms part of the ribosomal stalk which helps the ribosome interact with GTP-bound translation factors. This Moorella thermoacetica (strain ATCC 39073 / JCM 9320) protein is Large ribosomal subunit protein uL11.